Here is a 149-residue protein sequence, read N- to C-terminus: 3-hydroxyacyl-[acyl-carrier-protein] dehydratase FabZ (149 aa).

His52 is an active-site residue.

Belongs to the thioester dehydratase family. FabZ subfamily.

The protein resides in the cytoplasm. It carries out the reaction a (3R)-hydroxyacyl-[ACP] = a (2E)-enoyl-[ACP] + H2O. Involved in unsaturated fatty acids biosynthesis. Catalyzes the dehydration of short chain beta-hydroxyacyl-ACPs and long chain saturated and unsaturated beta-hydroxyacyl-ACPs. The chain is 3-hydroxyacyl-[acyl-carrier-protein] dehydratase FabZ from Cupriavidus necator (strain ATCC 17699 / DSM 428 / KCTC 22496 / NCIMB 10442 / H16 / Stanier 337) (Ralstonia eutropha).